Consider the following 251-residue polypeptide: Developmental protein SEPALLATA 3 (251 aa).

In terms of domain architecture, MADS-box spans 3 to 57; that stretch reads RGRVELKRIENKINRQVTFAKRRNGLLKKAYELSVLCDAEVALIIFSNRGKLYEF. Residues 91–181 enclose the K-box domain; it reads ELSSQQEYLK…RLRLADGYQM (91 aa). Residues 94–177 are a coiled coil; the sequence is SQQEYLKLKE…NKTLRLRLAD (84 aa).

As to quaternary structure, forms homodimers. Heterodimer with AP1 or AG capable of binding to CArG-box sequences. Binds AP3/PI to form a ternary complex. Interacts with AGL16. Interacts with TT16/AGL32.

The protein localises to the nucleus. Functionally, probable transcription factor active in inflorescence development and floral organogenesis. Functions with SEPALLATA1/AGL2 and SEPALLATA2/AGL4 to ensure proper development of petals, stamens and carpels and to prevent the indeterminate growth of the flower meristem. Interacts with APETALA1, AGAMOUS or APETALA3/PISTILLATA to form complexes, that could be involved in genes regulation during floral meristem development. Binds specifically to the CArG box DNA sequence 5'-CC (A/T)6 GG-3'. In Arabidopsis thaliana (Mouse-ear cress), this protein is Developmental protein SEPALLATA 3 (SEP3).